Reading from the N-terminus, the 213-residue chain is Orotate phosphoribosyltransferase (213 aa).

Lys-26 contributes to the 5-phospho-alpha-D-ribose 1-diphosphate binding site. 34 to 35 (FF) contributes to the orotate binding site. 5-phospho-alpha-D-ribose 1-diphosphate-binding positions include 72–73 (YK), Arg-99, Lys-100, Lys-103, His-105, and 124–132 (DDVITAGTS). Orotate contacts are provided by Thr-128 and Arg-156.

It belongs to the purine/pyrimidine phosphoribosyltransferase family. PyrE subfamily. As to quaternary structure, homodimer. Mg(2+) is required as a cofactor.

The enzyme catalyses orotidine 5'-phosphate + diphosphate = orotate + 5-phospho-alpha-D-ribose 1-diphosphate. It participates in pyrimidine metabolism; UMP biosynthesis via de novo pathway; UMP from orotate: step 1/2. Its function is as follows. Catalyzes the transfer of a ribosyl phosphate group from 5-phosphoribose 1-diphosphate to orotate, leading to the formation of orotidine monophosphate (OMP). The polypeptide is Orotate phosphoribosyltransferase (Methylococcus capsulatus (strain ATCC 33009 / NCIMB 11132 / Bath)).